Reading from the N-terminus, the 109-residue chain is Cell division protein ZapA (109 aa).

A coiled-coil region spans residues 21–99; sequence PEQQEALNQA…IEQALLEQGK (79 aa).

The protein belongs to the ZapA family. Type 1 subfamily. As to quaternary structure, homodimer. Interacts with FtsZ.

The protein localises to the cytoplasm. In terms of biological role, activator of cell division through the inhibition of FtsZ GTPase activity, therefore promoting FtsZ assembly into bundles of protofilaments necessary for the formation of the division Z ring. It is recruited early at mid-cell but it is not essential for cell division. The sequence is that of Cell division protein ZapA from Pectobacterium atrosepticum (strain SCRI 1043 / ATCC BAA-672) (Erwinia carotovora subsp. atroseptica).